The primary structure comprises 360 residues: Phosphate acyltransferase (360 aa).

Belongs to the PlsX family. As to quaternary structure, homodimer. Probably interacts with PlsY.

The protein localises to the cytoplasm. The enzyme catalyses a fatty acyl-[ACP] + phosphate = an acyl phosphate + holo-[ACP]. It participates in lipid metabolism; phospholipid metabolism. Functionally, catalyzes the reversible formation of acyl-phosphate (acyl-PO(4)) from acyl-[acyl-carrier-protein] (acyl-ACP). This enzyme utilizes acyl-ACP as fatty acyl donor, but not acyl-CoA. This is Phosphate acyltransferase from Janthinobacterium sp. (strain Marseille) (Minibacterium massiliensis).